Reading from the N-terminus, the 77-residue chain is Acyl carrier protein (77 aa).

The region spanning 4–77 (SETFEKVKKI…TVQAAVDXIN (74 aa)) is the Carrier domain. O-(pantetheine 4'-phosphoryl)serine is present on Ser40.

It belongs to the acyl carrier protein (ACP) family. 4'-phosphopantetheine is transferred from CoA to a specific serine of apo-ACP by AcpS. This modification is essential for activity because fatty acids are bound in thioester linkage to the sulfhydryl of the prosthetic group.

The protein resides in the cytoplasm. Its pathway is lipid metabolism; fatty acid biosynthesis. Its function is as follows. Carrier of the growing fatty acid chain in fatty acid biosynthesis. The protein is Acyl carrier protein of Anabaena variabilis.